The primary structure comprises 239 residues: tRNA (guanine-N(7)-)-methyltransferase (239 aa).

S-adenosyl-L-methionine is bound by residues Glu-69, Glu-94, Asp-121, and Asp-144. The active site involves Asp-144. Residue Lys-148 coordinates substrate. An interaction with RNA region spans residues 150 to 155 (RHNKRR). Residues Asp-180 and 217 to 220 (TKFE) each bind substrate.

The protein belongs to the class I-like SAM-binding methyltransferase superfamily. TrmB family. Monomer.

It carries out the reaction guanosine(46) in tRNA + S-adenosyl-L-methionine = N(7)-methylguanosine(46) in tRNA + S-adenosyl-L-homocysteine. It functions in the pathway tRNA modification; N(7)-methylguanine-tRNA biosynthesis. Its function is as follows. Catalyzes the formation of N(7)-methylguanine at position 46 (m7G46) in tRNA. The sequence is that of tRNA (guanine-N(7)-)-methyltransferase from Escherichia coli O6:K15:H31 (strain 536 / UPEC).